A 284-amino-acid polypeptide reads, in one-letter code: Nucleoid occlusion protein (284 aa).

The H-T-H motif DNA-binding region spans 143 to 162 (EALAQRVGKSQSAIANKMRL).

It belongs to the ParB family.

It is found in the cytoplasm. The protein localises to the nucleoid. Effects nucleoid occlusion by binding relatively nonspecifically to DNA and preventing the assembly of the division machinery in the vicinity of the nucleoid, especially under conditions that disturb the cell cycle. It helps to coordinate cell division and chromosome segregation by preventing the formation of the Z ring through the nucleoid, which would cause chromosome breakage. This Listeria monocytogenes serovar 1/2a (strain ATCC BAA-679 / EGD-e) protein is Nucleoid occlusion protein.